We begin with the raw amino-acid sequence, 839 residues long: Transcription regulator protein BACH2 (839 aa).

Positions 37–103 (CDVTLIVERK…AYTAKLLLSR (67 aa)) constitute a BTB domain. Disordered regions lie at residues 150–170 (QRPQEDHGNSAGEEEEEEETM) and 247–331 (HGTS…LDRS). Positions 161-170 (GEEEEEEETM) are enriched in acidic residues. Over residues 247-263 (HGTSGFASTFSEDSPGN) the composition is skewed to polar residues. A compositionally biased stretch (basic and acidic residues) spans 297–312 (TDIKDRPGDVEMDRKQ). Ser-314 carries the post-translational modification Phosphoserine. A compositionally biased stretch (low complexity) spans 321-331 (TPTGAACLDRS). Glycyl lysine isopeptide (Lys-Gly) (interchain with G-Cter in SUMO2) cross-links involve residues Lys-381 and Lys-420. Ser-520 carries the phosphoserine modification. A disordered region spans residues 582–609 (QSYGTNSSDESGSFSEADSESCPVQDRG). The span at 583–597 (SYGTNSSDESGSFSE) shows a compositional bias: polar residues. Positions 645–708 (FIHDIRRRSK…GELLDNFSCL (64 aa)) constitute a bZIP domain. Residues 650-666 (RRRSKNRIAAQRCRKRK) form a basic motif region. The tract at residues 670-677 (IQNLECEI) is leucine-zipper. The interval 778-813 (PWVPSNTSENCTSGRRLEGSDPGTFSERGPPLEARS) is disordered. Over residues 781–790 (PSNTSENCTS) the composition is skewed to polar residues. The Nuclear export signal motif lies at 819 to 839 (DFCQEMTEKCTTDEQPRKDYA).

It belongs to the bZIP family. CNC subfamily. Homodimer; disulfide-linked. Heterodimer of BACH2 and Maf-related transcription factors. The reversible disulfide bond may provide a mechanism to regulate the activity in oxidative stress responses. In terms of processing, phosphorylation at Ser-520 downstream of the PI-3K pathway promotes nuclear export. In terms of tissue distribution, detected in brain and spleen.

Its subcellular location is the cytoplasm. It localises to the nucleus. Its function is as follows. Transcriptional regulator that acts as a repressor or activator. Binds to Maf recognition elements (MARE). Plays an important role in coordinating transcription activation and repression by MAFK. Induces apoptosis in response to oxidative stress through repression of the antiapoptotic factor HMOX1. Positively regulates the nuclear import of actin. Is a key regulator of adaptive immunity, crucial for the maintenance of regulatory T-cell function and B-cell maturation. The chain is Transcription regulator protein BACH2 (Bach2) from Mus musculus (Mouse).